The sequence spans 475 residues: ATP synthase subunit beta, chloroplastic (475 aa).

156-163 (GGAGVGKT) provides a ligand contact to ATP.

The protein belongs to the ATPase alpha/beta chains family. F-type ATPases have 2 components, CF(1) - the catalytic core - and CF(0) - the membrane proton channel. CF(1) has five subunits: alpha(3), beta(3), gamma(1), delta(1), epsilon(1). CF(0) has four main subunits: a(1), b(1), b'(1) and c(9-12).

It is found in the plastid. It localises to the chloroplast thylakoid membrane. The enzyme catalyses ATP + H2O + 4 H(+)(in) = ADP + phosphate + 5 H(+)(out). In terms of biological role, produces ATP from ADP in the presence of a proton gradient across the membrane. The catalytic sites are hosted primarily by the beta subunits. The polypeptide is ATP synthase subunit beta, chloroplastic (Gracilaria tenuistipitata var. liui (Red alga)).